Here is a 173-residue protein sequence, read N- to C-terminus: MSDRATTTASLTFESLYGTHHGWLKSWLTRKLQSAFDADDIAQDTFLRVMVSETLSTIRDPRSFLCTIAKRVMVDLFRRNALEKAYLEMLALMPEGGAPSPEERESQLETLQLLDSMLDGLNGKTREAFLLSQLDGLTYSEIAHKLGVSISSVKKYVAKAVEHCLLFRLEYGL.

A Polymerase core binding motif is present at residues 40 to 52 (DIAQDTFLRVMVS). A DNA-binding region (H-T-H motif) is located at residues 139–158 (YSEIAHKLGVSISSVKKYVA).

The protein belongs to the sigma-70 factor family. ECF subfamily. As to quaternary structure, interacts with FecR (via cytoplasmic N-terminus).

Its function is as follows. Sigma factors are initiation factors that promote the attachment of RNA polymerase to specific initiation sites and are then released. This sigma factor regulates transcriptional activation of the fecABCDE operon which mediates ferric citrate transport. In Escherichia coli (strain K12), this protein is Ferric citrate uptake sigma factor FecI (fecI).